Consider the following 178-residue polypeptide: Protein Vhl (178 aa).

This sequence belongs to the VHL family. As to quaternary structure, part of a complex with Cul2, Roc1a/Rbx1 and the elongin BC complex. Interacts with sima/Hif1a. Interacts with itself. Interacts with mgr and betaTub56D/tubulin beta-1 chain. Interacts with tubulin alpha-beta heterodimers by itself or in complex with mgr. Interacts with microtubules (MTs).

It participates in protein modification; protein ubiquitination. In terms of biological role, involved in development of tracheal vasculature. Probably involved in halting cell migration at the end of vascular tube outgrowth. Possesses E3 ubiquitin ligase activity when in complex with Elongin BC complex, Cul2 and Rox1a/Rbx1, and can target sima/Hif1a for ubiquitination. May play a critical role in promoting microtubule stabilization when tubulins are correctly folded by the prefoldin complex. If tubulin is incorrectly folded, may promote its degradation. This is Protein Vhl from Drosophila melanogaster (Fruit fly).